The following is a 471-amino-acid chain: ATP synthase subunit beta (471 aa).

Residue 158–165 (GGAGCGKT) coordinates ATP.

The protein belongs to the ATPase alpha/beta chains family. As to quaternary structure, F-type ATPases have 2 components, CF(1) - the catalytic core - and CF(0) - the membrane proton channel. CF(1) has five subunits: alpha(3), beta(3), gamma(1), delta(1), epsilon(1). CF(0) has three main subunits: a(1), b(2) and c(9-12). The alpha and beta chains form an alternating ring which encloses part of the gamma chain. CF(1) is attached to CF(0) by a central stalk formed by the gamma and epsilon chains, while a peripheral stalk is formed by the delta and b chains.

The protein resides in the cell inner membrane. The enzyme catalyses ATP + H2O + 4 H(+)(in) = ADP + phosphate + 5 H(+)(out). Produces ATP from ADP in the presence of a proton gradient across the membrane. The catalytic sites are hosted primarily by the beta subunits. This is ATP synthase subunit beta from Desulfotalea psychrophila (strain LSv54 / DSM 12343).